The primary structure comprises 284 residues: Non-selective voltage-gated ion channel VDAC3 (284 aa).

At Cys-2 the chain carries N-acetylcysteine. Thr-4 carries the phosphothreonine modification. Residues Lys-12, Lys-15, and Lys-20 each carry the N6-acetyllysine modification. 2 consecutive transmembrane segments (beta stranded) span residues 26 to 35 (MVKIDLKTKS) and 39 to 48 (VMEFSTSGHA). A Glycyl lysine isopeptide (Lys-Gly) (interchain with G-Cter in ubiquitin) cross-link involves residue Lys-54. 3 beta stranded membrane passes run 55 to 65 (ASGNLETKYKV), 70 to 77 (LTFTQKWN), and 81 to 90 (TLGTEISWEN). Lys-91 is subject to N6-acetyllysine. The beta stranded transmembrane segment at 96–105 (LKLTLDTIFV) threads the bilayer. Residues Lys-110 and Lys-111 each participate in a glycyl lysine isopeptide (Lys-Gly) (interchain with G-Cter in ubiquitin) cross-link. 10 beta stranded membrane-spanning segments follow: residues 112–121 (SGKLKASYKR), 124–131 (FSVGSNVD), 138–146 (TIYGWAVLA), 151–159 (LAGYQMSFD), 164–176 (KLSQ…GYKA), 179–186 (FQLHTHVN), 190–199 (EFGGSIYQKV), 203–212 (IETSINLAWT), 219–228 (RFGIAAKYML), and 232–239 (TSLSAKVN). Position 242 is a phosphoserine (Ser-242). NAD(+) is bound by residues 243-245 (LIG) and 261-265 (SALID). The next 2 membrane-spanning stretches (beta stranded) occupy residues 243–252 (LIGLGYTQTL) and 255–264 (GVKLTLSALI). Lys-267 is modified (N6-acetyllysine; alternate). Lys-267 participates in a covalent cross-link: Glycyl lysine isopeptide (Lys-Gly) (interchain with G-Cter in ubiquitin); alternate. A beta stranded transmembrane segment spans residues 274–283 (HKVGLGFELE).

The protein belongs to the eukaryotic mitochondrial porin family. In terms of assembly, interacts with ARMC12 in a TBC1D21-dependent manner. Interacts with MISFA. Post-translationally, ubiquitinated by PRKN during mitophagy, leading to its degradation and enhancement of mitophagy. Deubiquitinated by USP30.

Its subcellular location is the mitochondrion outer membrane. It localises to the membrane. It carries out the reaction chloride(in) = chloride(out). The catalysed reaction is K(+)(in) = K(+)(out). In terms of biological role, non-selective voltage-gated ion channel that mediates the transport of anions and cations through the mitochondrion outer membrane and plasma membrane. Forms a high-conducting channel with a stable open state and a voltage-induced closure with a mild preference for anions over cations. Involved in male fertility and sperm mitochondrial sheath formation. This is Non-selective voltage-gated ion channel VDAC3 from Pongo abelii (Sumatran orangutan).